Consider the following 120-residue polypeptide: MDKKRNDKDRKRFKRKMHIRKSIFGTAERPRMTVFRSNKRISVQVIDDVEGKTLAAVSTMEEALRSLKVNVESGAKVGEEIGKRLKEKNIDTVVFDRNGYLYHGVVKAVADGARKTGIKF.

It belongs to the universal ribosomal protein uL18 family. In terms of assembly, part of the 50S ribosomal subunit; part of the 5S rRNA/L5/L18/L25 subcomplex. Contacts the 5S and 23S rRNAs.

In terms of biological role, this is one of the proteins that bind and probably mediate the attachment of the 5S RNA into the large ribosomal subunit, where it forms part of the central protuberance. This Treponema denticola (strain ATCC 35405 / DSM 14222 / CIP 103919 / JCM 8153 / KCTC 15104) protein is Large ribosomal subunit protein uL18.